We begin with the raw amino-acid sequence, 63 residues long: Large ribosomal subunit protein uL29 (63 aa).

This sequence belongs to the universal ribosomal protein uL29 family.

The sequence is that of Large ribosomal subunit protein uL29 from Pseudoalteromonas translucida (strain TAC 125).